Here is a 329-residue protein sequence, read N- to C-terminus: Cytosolic Fe-S cluster assembly factor NBP35 (329 aa).

Residues 1-33 (MAPSQVEDISKTELETPEHCPGPESEQAGKEDA) are disordered. The span at 8 to 18 (DISKTELETPE) shows a compositional bias: basic and acidic residues. Positions 20, 34, 37, and 43 each coordinate [4Fe-4S] cluster. Residue 74 to 81 (GKGGVGKS) coordinates ATP. Cys248 and Cys251 together coordinate [4Fe-4S] cluster.

It belongs to the Mrp/NBP35 ATP-binding proteins family. NUBP1/NBP35 subfamily. Heterotetramer of 2 NBP35 and 2 CFD1 chains. Requires [4Fe-4S] cluster as cofactor.

It is found in the cytoplasm. The protein localises to the nucleus. In terms of biological role, component of the cytosolic iron-sulfur (Fe/S) protein assembly (CIA) machinery. Required for maturation of extramitochondrial Fe-S proteins. The NBP35-CFD1 heterotetramer forms a Fe-S scaffold complex, mediating the de novo assembly of an Fe-S cluster and its transfer to target apoproteins. Required for biogenesis and export of both ribosomal subunits, which may reflect a role in assembly of the Fe/S clusters in RLI1, a protein which performs rRNA processing and ribosome export. The protein is Cytosolic Fe-S cluster assembly factor NBP35 of Debaryomyces hansenii (strain ATCC 36239 / CBS 767 / BCRC 21394 / JCM 1990 / NBRC 0083 / IGC 2968) (Yeast).